The chain runs to 361 residues: Beta-hexosaminidase (361 aa).

Residues D69, R77, R144, and 174-175 each bind substrate; that span reads KH. H187 (proton donor/acceptor) is an active-site residue. D258 acts as the Nucleophile in catalysis.

This sequence belongs to the glycosyl hydrolase 3 family. NagZ subfamily.

Its subcellular location is the cytoplasm. It carries out the reaction Hydrolysis of terminal non-reducing N-acetyl-D-hexosamine residues in N-acetyl-beta-D-hexosaminides.. It functions in the pathway cell wall biogenesis; peptidoglycan recycling. In terms of biological role, plays a role in peptidoglycan recycling by cleaving the terminal beta-1,4-linked N-acetylglucosamine (GlcNAc) from peptide-linked peptidoglycan fragments, giving rise to free GlcNAc, anhydro-N-acetylmuramic acid and anhydro-N-acetylmuramic acid-linked peptides. This is Beta-hexosaminidase from Neisseria meningitidis serogroup B (strain ATCC BAA-335 / MC58).